A 468-amino-acid polypeptide reads, in one-letter code: Phosphoglucosamine mutase (468 aa).

The active-site Phosphoserine intermediate is Ser-112. Mg(2+)-binding residues include Ser-112, Asp-254, Asp-256, and Asp-258. Residue Ser-112 is modified to Phosphoserine.

It belongs to the phosphohexose mutase family. The cofactor is Mg(2+). Post-translationally, activated by phosphorylation.

It carries out the reaction alpha-D-glucosamine 1-phosphate = D-glucosamine 6-phosphate. Functionally, catalyzes the conversion of glucosamine-6-phosphate to glucosamine-1-phosphate. The protein is Phosphoglucosamine mutase of Prochlorococcus marinus (strain MIT 9303).